Here is a 220-residue protein sequence, read N- to C-terminus: Cytidylate kinase (220 aa).

ATP is bound at residue 9-17; the sequence is GPAASGKST.

Belongs to the cytidylate kinase family. Type 1 subfamily.

It localises to the cytoplasm. It carries out the reaction CMP + ATP = CDP + ADP. The catalysed reaction is dCMP + ATP = dCDP + ADP. This Thermotoga neapolitana (strain ATCC 49049 / DSM 4359 / NBRC 107923 / NS-E) protein is Cytidylate kinase.